Consider the following 403-residue polypeptide: MTVVREYDPTRDLVGVEDVERRCEVGPSGKLSLFTDLLGDPICRIRHSPSYLMLVAEMGTEKKEIVGMIRGCIKTVTCGQKLDLNHKSQNDVVKPLYTKLAYVLGLRVSPFHRRQGIGFKLVKMMEEWFRQNGAEYSYIATENDNQASVNLFTGKCGYSEFRTPSILVNPVYAHRVNVSRRVTVIKLEPVDAETLYRIRFSTTEFFPRDIDSVLNNKLSLGTFVAVPRGSCYGSGSGSWPGSAKFLEYPPESWAVLSVWNCKDSFLLEVRGASRLRRVVAKTTRVVDKTLPFLKLPSIPSVFEPFGLHFMYGIGGEGPRAVKMVKSLCAHAHNLAKAGGCGVVAAEVAGEDPLRRGIPHWKVLSCDEDLWCIKRLGDDYSDGVVGDWTKSPPGVSIFVDPREF.

Residues 2-177 (TVVREYDPTR…VNPVYAHRVN (176 aa)) enclose the N-acetyltransferase domain.

This sequence belongs to the acetyltransferase family.

In terms of biological role, ethylene-responsive N-acetyltransferase required for differential cell elongation in the hypocotyl. Regulates apical hook formation of dark-grown seedlings. May control differential cell growth by regulating auxin activity. May be involved in negative feedback regulation of auxin homeostasis through the control of GH3-like genes. Modulates de novo shoot organogenesis. The polypeptide is Probable N-acetyltransferase HLS1 (HLS1) (Arabidopsis thaliana (Mouse-ear cress)).